Here is a 61-residue protein sequence, read N- to C-terminus: Translational regulator CsrA (61 aa).

Belongs to the CsrA/RsmA family. In terms of assembly, homodimer; the beta-strands of each monomer intercalate to form a hydrophobic core, while the alpha-helices form wings that extend away from the core.

The protein localises to the cytoplasm. Its function is as follows. A key translational regulator that binds mRNA to regulate translation initiation and/or mRNA stability. Mediates global changes in gene expression, shifting from rapid growth to stress survival by linking envelope stress, the stringent response and the catabolite repression systems. Usually binds in the 5'-UTR; binding at or near the Shine-Dalgarno sequence prevents ribosome-binding, repressing translation, binding elsewhere in the 5'-UTR can activate translation and/or stabilize the mRNA. Its function is antagonized by small RNA(s). The chain is Translational regulator CsrA from Mannheimia succiniciproducens (strain KCTC 0769BP / MBEL55E).